Consider the following 1850-residue polypeptide: Serine/threonine-protein kinase WNK (1850 aa).

3 disordered regions span residues methionine 1 to glutamate 108, glutamine 221 to lysine 253, and methionine 272 to alanine 309. Low complexity-rich tracts occupy residues serine 16 to threonine 26 and proline 234 to asparagine 251. A compositionally biased stretch (basic and acidic residues) spans aspartate 284–alanine 309. In terms of domain architecture, Protein kinase spans leucine 334 to phenylalanine 596. ATP-binding positions include serine 344, threonine 416 to methionine 419, and lysine 466. The active-site Proton acceptor is aspartate 483. Positions aspartate 693–asparagine 749 form a coiled coil. Residues glutamate 727–alanine 742 show a composition bias toward basic and acidic residues. 7 disordered regions span residues glutamate 727–proline 790, threonine 890–serine 943, glutamate 1040–proline 1130, serine 1188–isoleucine 1249, glycine 1588–serine 1636, alanine 1721–glycine 1740, and isoleucine 1769–valine 1850. Positions asparagine 751 to alanine 760 are enriched in pro residues. The segment covering serine 776–proline 790 has biased composition (polar residues). Positions threonine 890–threonine 934 are enriched in low complexity. The segment covering proline 1062–proline 1071 has biased composition (basic and acidic residues). Over residues glutamine 1077–serine 1101 the composition is skewed to polar residues. The segment covering serine 1188–asparagine 1207 has biased composition (low complexity). The span at methionine 1208–valine 1217 shows a compositional bias: polar residues. The segment covering proline 1771–serine 1805 has biased composition (low complexity). Positions tyrosine 1806–alanine 1820 are enriched in polar residues. A compositionally biased stretch (low complexity) spans serine 1821–serine 1832.

It belongs to the protein kinase superfamily. Ser/Thr protein kinase family. WNK subfamily. In terms of assembly, interacts with gck-3 (via C-terminus). Requires Mg(2+) as cofactor. Expressed in pharynx, nervous system, hypodermis, spermatheca, excretory cell and canal and body wall muscles.

The protein resides in the cytoplasm. The enzyme catalyses L-seryl-[protein] + ATP = O-phospho-L-seryl-[protein] + ADP + H(+). It catalyses the reaction L-threonyl-[protein] + ATP = O-phospho-L-threonyl-[protein] + ADP + H(+). Its activity is regulated as follows. Activated in response to hyperosmotic stress: cell shrinkage promotes formation of a membraneless compartment that concentrates wnk-1 with its downstrem substrates. Serine/threonine-protein kinase component of the WNK3-SPAK/OSR1 kinase cascade, which plays an important role in the regulation of electrolyte homeostasis and regulatory volume increase in response to hyperosmotic stress. Wnk-1 mediates regulatory volume increase in response to hyperosmotic stress by acting as a molecular crowding sensor, which senses cell shrinkage and mediates formation of a membraneless compartment by undergoing liquid-liquid phase separation. The membraneless compartment concentrates wnk-1 with its substrates. Phosphorylates gck-3. Plays a role in osmotic stress responses during which it increases gpdh-1 translation, likely by phosphorylating gck-3. Essential for larval development and the tubular formation of the excretory canals. The chain is Serine/threonine-protein kinase WNK from Caenorhabditis elegans.